Reading from the N-terminus, the 295-residue chain is MNEKDLKLMVEQLVSQMVGQVDMQSVEKVVKEVSKNQSQVESDEFIPDITEIDIKKQLLVDNPADREAYLEMKAKTPARLGSGRAGARYKTITALRMRADHAAAQDSVFSDVSEEFIKKNNFIPVKTMCTDKDEYVTRPDLGRRFSPETTEIIKEKCDKNPKVQIMVGDGLSSAAIEANVEDILPSIEQGLKMYGLNVGPILFVKYCRVPAMDAVGEATGADVVCLLVGERPGLVTAESMSAYIAYKPKVGMPEAKRTVISNIHKGGTTAVEAGAHIAELIKTMLDKKASGIDLK.

The adenosylcob(III)alamin site is built by V209 and E230.

It belongs to the EutC family. As to quaternary structure, the basic unit is a heterodimer which dimerizes to form tetramers. The heterotetramers trimerize; 6 large subunits form a core ring with 6 small subunits projecting outwards. Adenosylcob(III)alamin is required as a cofactor.

It localises to the bacterial microcompartment. It carries out the reaction ethanolamine = acetaldehyde + NH4(+). It participates in amine and polyamine degradation; ethanolamine degradation. Catalyzes the deamination of various vicinal amino-alcohols to oxo compounds. Allows this organism to utilize ethanolamine as the sole source of nitrogen and carbon in the presence of external vitamin B12. This Clostridium perfringens (strain ATCC 13124 / DSM 756 / JCM 1290 / NCIMB 6125 / NCTC 8237 / Type A) protein is Ethanolamine ammonia-lyase small subunit.